Reading from the N-terminus, the 279-residue chain is Malonyl-[acyl-carrier protein] O-methyltransferase (279 aa).

Belongs to the methyltransferase superfamily.

It catalyses the reaction malonyl-[ACP] + S-adenosyl-L-methionine = malonyl-[ACP] methyl ester + S-adenosyl-L-homocysteine. It participates in cofactor biosynthesis; biotin biosynthesis. Functionally, converts the free carboxyl group of a malonyl-thioester to its methyl ester by transfer of a methyl group from S-adenosyl-L-methionine (SAM). It allows to synthesize pimeloyl-ACP via the fatty acid synthetic pathway. In Hahella chejuensis (strain KCTC 2396), this protein is Malonyl-[acyl-carrier protein] O-methyltransferase.